Here is a 343-residue protein sequence, read N- to C-terminus: Dihydroorotase (343 aa).

H14 and H16 together coordinate Zn(2+). Substrate-binding positions include 16–18 (HLR) and N42. Residues K100, H137, and H175 each contribute to the Zn(2+) site. The residue at position 100 (K100) is an N6-carboxylysine. Residue H137 participates in substrate binding. L220 contributes to the substrate binding site. D248 contributes to the Zn(2+) binding site. D248 is an active-site residue. 2 residues coordinate substrate: H252 and A264.

This sequence belongs to the metallo-dependent hydrolases superfamily. DHOase family. Class II DHOase subfamily. As to quaternary structure, homodimer. Requires Zn(2+) as cofactor.

The enzyme catalyses (S)-dihydroorotate + H2O = N-carbamoyl-L-aspartate + H(+). It participates in pyrimidine metabolism; UMP biosynthesis via de novo pathway; (S)-dihydroorotate from bicarbonate: step 3/3. In terms of biological role, catalyzes the reversible cyclization of carbamoyl aspartate to dihydroorotate. In Parasynechococcus marenigrum (strain WH8102), this protein is Dihydroorotase.